The chain runs to 362 residues: MAQVYNFSSGPAMLPAEVLKLAQQELCDWHGLGTSVMEISHRGKEFIQVAEEAEQDFRSLLNIPSNYKVLFCHGGGRGQFAGIPLNILGDKNVADYVDAGYWAASAVKEAKKYCAPNVIDAKITVDGKRAVTPMSEWQLTPGAAYLHYCPNETIDGIAIDDTPNFGDDVIVAADFSSTILSREIDVNRFGVIYAGAQKNIGPAGLTLVIVREDLLGKASVACPSILDYTVLSENDSMFNTPPTFAWYLAGLVFKWLKQQGGVAAMDKINQQKAELLYGVIDNSGFYRNDVAQANRSRMNVPFQLADSALDKLFLEESFAAGLHALKGHRVVGGMRASIYNAMPLDGVKALTDFMLDFERRHG.

Residues serine 9 and arginine 42 each coordinate L-glutamate. Pyridoxal 5'-phosphate is bound by residues 76-77 (GR), tryptophan 102, threonine 153, aspartate 174, and glutamine 197. At lysine 198 the chain carries N6-(pyridoxal phosphate)lysine. A pyridoxal 5'-phosphate-binding site is contributed by 239–240 (NT).

The protein belongs to the class-V pyridoxal-phosphate-dependent aminotransferase family. SerC subfamily. Homodimer. Pyridoxal 5'-phosphate serves as cofactor.

The protein resides in the cytoplasm. The enzyme catalyses O-phospho-L-serine + 2-oxoglutarate = 3-phosphooxypyruvate + L-glutamate. It catalyses the reaction 4-(phosphooxy)-L-threonine + 2-oxoglutarate = (R)-3-hydroxy-2-oxo-4-phosphooxybutanoate + L-glutamate. Its pathway is amino-acid biosynthesis; L-serine biosynthesis; L-serine from 3-phospho-D-glycerate: step 2/3. It functions in the pathway cofactor biosynthesis; pyridoxine 5'-phosphate biosynthesis; pyridoxine 5'-phosphate from D-erythrose 4-phosphate: step 3/5. Functionally, catalyzes the reversible conversion of 3-phosphohydroxypyruvate to phosphoserine and of 3-hydroxy-2-oxo-4-phosphonooxybutanoate to phosphohydroxythreonine. In Klebsiella pneumoniae (strain 342), this protein is Phosphoserine aminotransferase.